A 576-amino-acid chain; its full sequence is Calcium-dependent protein kinase 11 (576 aa).

G2 carries N-myristoyl glycine lipidation. A disordered region spans residues P27–R88. Over residues A41 to E56 the composition is skewed to low complexity. One can recognise a Protein kinase domain in the interval Y113–V371. Residues L119–T127 and K142 each bind ATP. The Proton acceptor role is filled by D237. The tract at residues A377 to I407 is autoinhibitory domain. EF-hand domains follow at residues E414 to N449, L450 to V485, E486 to G521, and D522 to A555. Residues D427, D429, S431, H433, E438, D463, D465, S467, T469, E474, D499, D501, S503, Y505, E510, D533, D535, D537, R539, and E544 each coordinate Ca(2+).

The protein belongs to the protein kinase superfamily. Ser/Thr protein kinase family. CDPK subfamily.

It localises to the membrane. It catalyses the reaction L-seryl-[protein] + ATP = O-phospho-L-seryl-[protein] + ADP + H(+). The enzyme catalyses L-threonyl-[protein] + ATP = O-phospho-L-threonyl-[protein] + ADP + H(+). Its activity is regulated as follows. Activated by calcium. Autophosphorylation may play an important role in the regulation of the kinase activity. Functionally, may play a role in signal transduction pathways that involve calcium as a second messenger. This is Calcium-dependent protein kinase 11 from Oryza sativa subsp. japonica (Rice).